Consider the following 57-residue polypeptide: Plasma membrane proteolipid 3 (57 aa).

Residues 34 to 54 traverse the membrane as a helical segment; sequence INILLTILGYLPGIVHALYII.

It belongs to the UPF0057 (PMP3) family.

The protein resides in the cell membrane. Functionally, plays a role in the regulation of membrane potential. Could mediate a proton leak. This is Plasma membrane proteolipid 3 (pmp-1) from Neurospora crassa (strain ATCC 24698 / 74-OR23-1A / CBS 708.71 / DSM 1257 / FGSC 987).